A 133-amino-acid polypeptide reads, in one-letter code: CCSKFGYCGLTDAYNFYTGQLTSFAHVTHETGNNAYCDPSKTQKPCAAGKKYYGRGPIQISXNYNYGPAGRAIGMDGLGNPDRVAQDALDDYKTALXFLVNGEEAVPGLSAANAVSYYRQYCQQLGVDPGPNL.

Glu30 (proton donor) is an active-site residue.

It belongs to the glycosyl hydrolase 19 family. Chitinase class I subfamily.

It catalyses the reaction Random endo-hydrolysis of N-acetyl-beta-D-glucosaminide (1-&gt;4)-beta-linkages in chitin and chitodextrins.. This protein functions both as an alpha-amylase inhibitor and as a chitinase. The protein is Alpha-amylase inhibitor/endochitinase of Coix lacryma-jobi (Job's tears).